We begin with the raw amino-acid sequence, 502 residues long: Zinc finger C3HC-type protein 1 (502 aa).

An N-acetylalanine modification is found at A2. S24 carries the post-translational modification Phosphoserine. T28 bears the Phosphothreonine mark. The interval 36-73 (IDEGIAPEEGGVDAKDTSATSQSVNGSPQAEQPSLEST) is disordered. Polar residues predominate over residues 52–72 (TSATSQSVNGSPQAEQPSLES). A phosphoserine mark is found at S58 and S62. T84 is subject to Phosphothreonine. The C3HC-type zinc finger occupies 102–156 (CAKYGWVTVECDMLKCSSCQAFLCASLQPAFDFDRYKQRCAELKKALCTAHEKFC). The segment at 170-210 (LPLDEPAILVSEFLDRFQSLCHLDLQLPSLRPEDLKTMCLT) is F-box-like. The tract at residues 302–423 (SSPIPGLEGR…SSRSFFDPTS (122 aa)) is disordered. Phosphoserine occurs at positions 321 and 329. Positions 327-338 (TRSQDATFSPGS) are enriched in polar residues. T333 carries the post-translational modification Phosphothreonine. S335, S338, S344, S354, S359, and S370 each carry phosphoserine. Residues 351-360 (RTRSWDSSSP) show a composition bias toward polar residues. Low complexity predominate over residues 371-380 (PTTRTRPVTR). At S381 the chain carries Phosphoserine. 2 positions are modified to phosphothreonine: T384 and T387. S395 carries the phosphoserine modification. Residues 396–402 (PLRKAKR) carry the Nuclear localization signal motif. 2 positions are modified to phosphoserine: S407 and S483. Residues 407 to 422 (SSSSSDTSSRSFFDPT) are compositionally biased toward low complexity.

In terms of assembly, interacts with TPR; this interaction mediates ZC3HC1 nuclear envelopes (NE)-association but also required for proper positioning of a substantial amount of TPR at the nuclear basket (NB). In terms of processing, phosphorylated. May also be weakly phosphorylated on Tyr residues. In terms of tissue distribution, widely expressed. Highly expressed in heart, skeletal muscle and testis. Expressed in brain, placenta, lung, kidney, liver, pancreas, spleen, thymus, prostate, ovary small intestine and colon. Weakly or not expressed in leukocytes.

It localises to the nucleus. The protein resides in the nucleus envelope. In terms of biological role, required for proper positioning of a substantial amount of TPR at the nuclear basket (NB) through interaction with TPR. This chain is Zinc finger C3HC-type protein 1, found in Homo sapiens (Human).